Here is a 506-residue protein sequence, read N- to C-terminus: Glutamate--tRNA ligase (506 aa).

The 'HIGH' region motif lies at 29–39; it reads PSPTGTPHVGL. A 'KMSKS' region motif is present at residues 273–277; sequence KLSKR. Lysine 276 provides a ligand contact to ATP.

It belongs to the class-I aminoacyl-tRNA synthetase family. Glutamate--tRNA ligase type 1 subfamily. Monomer.

The protein localises to the cytoplasm. The enzyme catalyses tRNA(Glu) + L-glutamate + ATP = L-glutamyl-tRNA(Glu) + AMP + diphosphate. Its function is as follows. Catalyzes the attachment of glutamate to tRNA(Glu) in a two-step reaction: glutamate is first activated by ATP to form Glu-AMP and then transferred to the acceptor end of tRNA(Glu). This is Glutamate--tRNA ligase from Paenarthrobacter aurescens (strain TC1).